The primary structure comprises 510 residues: NAD(P)H-quinone oxidoreductase subunit 2 A, chloroplastic (510 aa).

14 helical membrane-spanning segments follow: residues 31-51, 59-79, 99-119, 124-144, 149-169, 184-204, 229-249, 261-281, 295-315, 323-343, 354-374, 395-415, 418-438, and 484-504; these read FIFP…IDLT, WFYF…LFRW, IFQF…VEYI, MAIT…MFLC, LITI…LSGY, LLMG…LYGL, ISIA…LAPF, PTPV…ALAT, WHLL…LLAI, MLAY…IVGD, YMLF…LFGL, ALSL…AGFF, LYLF…IGLL, and MTVC…ILAI.

This sequence belongs to the complex I subunit 2 family. In terms of assembly, NDH is composed of at least 16 different subunits, 5 of which are encoded in the nucleus.

The protein resides in the plastid. Its subcellular location is the chloroplast thylakoid membrane. It carries out the reaction a plastoquinone + NADH + (n+1) H(+)(in) = a plastoquinol + NAD(+) + n H(+)(out). The enzyme catalyses a plastoquinone + NADPH + (n+1) H(+)(in) = a plastoquinol + NADP(+) + n H(+)(out). Its function is as follows. NDH shuttles electrons from NAD(P)H:plastoquinone, via FMN and iron-sulfur (Fe-S) centers, to quinones in the photosynthetic chain and possibly in a chloroplast respiratory chain. The immediate electron acceptor for the enzyme in this species is believed to be plastoquinone. Couples the redox reaction to proton translocation, and thus conserves the redox energy in a proton gradient. This is NAD(P)H-quinone oxidoreductase subunit 2 A, chloroplastic from Oryza sativa subsp. japonica (Rice).